A 289-amino-acid chain; its full sequence is G1/S-specific cyclin-D2 (289 aa).

The Cyclin N-terminal domain maps to 26–151; it reads VLQNLLTIEE…VVLGKLKWNL (126 aa). Residues 264–289 form a disordered region; sequence DQRDGSKSEDELDQASTPTDVRDIDL. Phosphoserine is present on S271. A Phosphothreonine modification is found at T280.

The protein belongs to the cyclin family. Cyclin D subfamily. As to quaternary structure, interacts with either CDK4 or CDK6 protein kinase to form a serine/threonine kinase holoenzyme complex. The cyclin subunit imparts substrate specificity to the complex. Post-translationally, phosphorylation at Thr-280 by MAP kinases is required for ubiquitination and degradation by the DCX(AMBRA1) complex. In terms of processing, ubiquitinated by the DCX(AMBRA1) complex during the transition from G1 to S cell phase, leading to its degradation: ubiquitination is dependent on Thr-280 phosphorylation. The DCX(AMBRA1) complex represents the major regulator of CCND2 stability during the G1/S transition. Polyubiquitinated by the SCF(FBXL2) complex, leading to proteasomal degradation.

It localises to the nucleus. The protein resides in the cytoplasm. Its subcellular location is the nucleus membrane. Functionally, regulatory component of the cyclin D2-CDK4 (DC) complex that phosphorylates and inhibits members of the retinoblastoma (RB) protein family including RB1 and regulates the cell-cycle during G(1)/S transition. Phosphorylation of RB1 allows dissociation of the transcription factor E2F from the RB/E2F complex and the subsequent transcription of E2F target genes which are responsible for the progression through the G(1) phase. Hypophosphorylates RB1 in early G(1) phase. Cyclin D-CDK4 complexes are major integrators of various mitogenenic and antimitogenic signals. This chain is G1/S-specific cyclin-D2, found in Homo sapiens (Human).